Consider the following 966-residue polypeptide: MANFQEHLSCSSSPHLPFSESKTFNGLQDELTAMGNHPSPKLLEDQQEKGMVRAELIESVHSPVTTTVLTSVSEDSRDQFENSVLQLREHDESEMAVSQGNSNTVDAESTSGTEDIKIQFSRSGSGSGGFLEGLFGCLRPVWNIIGKAYATDYKLQQQDTWEVPFEEISELQWLGSGAQGAVFLGKFRAEEVAIKKVREQNETDIKHLRKLKHPNIIAFKGVCTQAPCYCIIMEYCAHGQLYEVLRAGRKITPRLLVDWSTGIASGMNYLHLHKIIHRDLKSPNVLVTHTDAVKISDFGTSKELSDKSTKMSFAGTVAWLAPEVIRNEPVSEKVDIWSFGVVLWELLTGEIPYKDVDSSAIIWGVGSNSLHLPVPSTCPDGFKILMKQTWQSKPRNRPSFRQTLMHLDIASADVLATPQETYFKSQAEWREEVKKHFEKIKSEGTCIHRLDEELIRRRREELRHALDIREHYERKLERANNLYMELSAIMLQLEMREKELVKREQAVEKKYPGTYKRHPVRPIIHPNAMEKLMKRKGVPHKSGMQTKRPDLLRSEGIPTTEVAPTASPLSGSPKMSTSSSKSRYRSKPRHRRGNSRGSHSDFVAILKNQPAQENSPNPTYLHQAQSQYPSLHHRNSLQQQYQQPPPAMSQSHHPRLNMHGQDIATCANNLRYFGPAAALRSPLSNHAQRQLPGSSPDLISTAMAADCWRGSEPDKDQAGPWGCCQADPYDPCLQCRPEQYGSLDIPSAEPVGRSPDLSKSPAHNPLLENAQSSEKMEENEFSSCRSESSLGTSHLVTPPALPRKTRPLQKSGDDSSEEEEGEVDSEVEFPRRQRPHRCISSCQSYSTFSSENFSVSDGEEGNTSDHSNSPDELADKLEDRLAEKLDDLLSQTPEIPIDISSHSDGLSDKECAVRRVKTQMSLGKLCVEERGYENPMQFEESDCDSSDGECSDATVRTNKHYSSATW.

Disordered stretches follow at residues 1–22 (MANF…SESK) and 93–112 (SEMA…STSG). Over residues 96–112 (AVSQGNSNTVDAESTSG) the composition is skewed to polar residues. Positions 168 to 409 (ISELQWLGSG…FRQTLMHLDI (242 aa)) constitute a Protein kinase domain. ATP is bound by residues 174–182 (LGSGAQGAV) and K195. The active-site Proton acceptor is D279. Leucine-zipper stretches follow at residues 433–454 (VKKH…DEEL) and 486–507 (LSAI…EQAV). 4 disordered regions span residues 534–652 (KRKG…SQSH), 744–834 (DIPS…RRQR), 846–873 (STFS…PDEL), and 887–906 (DLLS…SDGL). Residues 567–581 (SPLSGSPKMSTSSSK) show a composition bias toward low complexity. The span at 582–594 (SRYRSKPRHRRGN) shows a compositional bias: basic residues. 2 stretches are compositionally biased toward polar residues: residues 609 to 629 (QPAQ…SQYP) and 781 to 795 (FSSC…TSHL). Residues 814–827 (DSSEEEEGEVDSEV) show a composition bias toward acidic residues. Residues 815 to 828 (SSEEEEGEVDSEVE) are acidic. Polar residues predominate over residues 846 to 855 (STFSSENFSV).

This sequence belongs to the protein kinase superfamily. STE Ser/Thr protein kinase family. MAP kinase kinase kinase subfamily. As to quaternary structure, homodimer; forms dimers through the leucine-zipper motif. Interacts with the C-terminus of MAPK8IP1 through the kinase catalytic domain. Binds PRDX3. Associates with the IKK complex through the kinase domain. The cofactor is Mg(2+). Autophosphorylated on serine and threonine residues.

The protein resides in the cytoplasm. It localises to the membrane. The catalysed reaction is L-seryl-[protein] + ATP = O-phospho-L-seryl-[protein] + ADP + H(+). It catalyses the reaction L-threonyl-[protein] + ATP = O-phospho-L-threonyl-[protein] + ADP + H(+). Its activity is regulated as follows. Activated by autophosphorylation and homodimerization. In terms of biological role, activates the JUN N-terminal pathway through activation of the MAP kinase kinase MAP2K7. Acts synergistically with PRDX3 to regulate the activation of NF-kappa-B in the cytosol. This activation is kinase-dependent and involves activating the IKK complex, the IKBKB-containing complex that phosphorylates inhibitors of NF-kappa-B. The polypeptide is Mitogen-activated protein kinase kinase kinase 13 (Pongo abelii (Sumatran orangutan)).